The primary structure comprises 407 residues: L-cysteine:1D-myo-inositol 2-amino-2-deoxy-alpha-D-glucopyranoside ligase (407 aa).

C43 provides a ligand contact to Zn(2+). Residues 43–46 (CGIT), T58, and 81–83 (NAT) each bind L-cysteinyl-5'-AMP. The 'HIGH' region signature appears at 45 to 55 (ITPYDATHLGH). Residues 183-188 (QRGGDP) carry the 'ERGGDP' region motif. W223 is an L-cysteinyl-5'-AMP binding site. C227 contributes to the Zn(2+) binding site. 245–247 (GSD) serves as a coordination point for L-cysteinyl-5'-AMP. Residue H252 participates in Zn(2+) binding. V279 contacts L-cysteinyl-5'-AMP. The 'KMSKS' region signature appears at 285–289 (KMSKS).

It belongs to the class-I aminoacyl-tRNA synthetase family. MshC subfamily. In terms of assembly, monomer. Zn(2+) serves as cofactor.

It carries out the reaction 1D-myo-inositol 2-amino-2-deoxy-alpha-D-glucopyranoside + L-cysteine + ATP = 1D-myo-inositol 2-(L-cysteinylamino)-2-deoxy-alpha-D-glucopyranoside + AMP + diphosphate + H(+). Functionally, catalyzes the ATP-dependent condensation of GlcN-Ins and L-cysteine to form L-Cys-GlcN-Ins. This chain is L-cysteine:1D-myo-inositol 2-amino-2-deoxy-alpha-D-glucopyranoside ligase, found in Streptosporangium roseum (strain ATCC 12428 / DSM 43021 / JCM 3005 / KCTC 9067 / NCIMB 10171 / NRRL 2505 / NI 9100).